The following is a 249-amino-acid chain: Chitooligosaccharide deacetylase (249 aa).

Mg(2+)-binding residues include H61 and H125.

Belongs to the YdjC deacetylase family. ChbG subfamily. As to quaternary structure, homodimer. Requires Mg(2+) as cofactor.

The protein resides in the cytoplasm. The catalysed reaction is N,N'-diacetylchitobiose + H2O = N-acetyl-beta-D-glucosaminyl-(1-&gt;4)-D-glucosamine + acetate. The enzyme catalyses diacetylchitobiose-6'-phosphate + H2O = N'-monoacetylchitobiose-6'-phosphate + acetate. Its pathway is glycan degradation; chitin degradation. Its function is as follows. Involved in the degradation of chitin. ChbG is essential for growth on the acetylated chitooligosaccharides chitobiose and chitotriose but is dispensable for growth on cellobiose and chitosan dimer, the deacetylated form of chitobiose. Deacetylation of chitobiose-6-P and chitotriose-6-P is necessary for both the activation of the chb promoter by the regulatory protein ChbR and the hydrolysis of phosphorylated beta-glucosides by the phospho-beta-glucosidase ChbF. Catalyzes the removal of only one acetyl group from chitobiose-6-P to yield monoacetylchitobiose-6-P, the inducer of ChbR and the substrate of ChbF. The protein is Chitooligosaccharide deacetylase of Escherichia coli O9:H4 (strain HS).